Consider the following 416-residue polypeptide: CinA-like protein (416 aa).

This sequence belongs to the CinA family.

The polypeptide is CinA-like protein (Amoebophilus asiaticus (strain 5a2)).